The primary structure comprises 127 residues: Turripeptide OL172 (127 aa).

A signal peptide spans 1-20; sequence MFSTLIFLTAVTLLMMPSQT. Residues 42–43 constitute a propeptide that is removed on maturation; the sequence is QR. Q44 carries the pyrrolidone carboxylic acid modification. The propeptide occupies 73–75; sequence QRK. Position 76 is a pyrrolidone carboxylic acid (Q76). Residues 104-106 constitute a propeptide that is removed on maturation; sequence QRK. Q107 carries the post-translational modification Pyrrolidone carboxylic acid.

Post-translationally, the turripeptide OL172 conotoxin-like contains 2 disulfide bonds. In terms of tissue distribution, expressed by the venom duct.

It is found in the secreted. Functionally, acts as a neurotoxin by inhibiting an ion channel. This chain is Turripeptide OL172, found in Iotyrris olangoensis (Sea snail).